The following is a 277-amino-acid chain: Energy-coupling factor transporter ATP-binding protein EcfA1 (277 aa).

Residues 5–240 (LEVENLVFKY…SEDMVEIGLD (236 aa)) form the ABC transporter domain. 40–47 (GQNGSGKS) contacts ATP. Residue E166 is the Proton acceptor of the active site.

The protein belongs to the ABC transporter superfamily. Energy-coupling factor EcfA family. In terms of assembly, forms a stable energy-coupling factor (ECF) transporter complex composed of 2 membrane-embedded substrate-binding proteins (S component), 2 ATP-binding proteins (A component) and 2 transmembrane proteins (T component). In L.lactis forms a stable complex with EcfA' and EcfT and substrate-binding components. In E.coli forms a stable complex with EcfA', EcfT and individually with 3 tested substrate-binding components (BioY, NiaX and ThiT) with a stoichiometry of 1.1:1:1. The core ECF complex interacts with a number of substrate-specific binding components, including BioY, BioY2, HmpT, NiaX, PanT, QueT, RibU and ThiT.

The protein resides in the cell membrane. ATP-binding (A) component of a common energy-coupling factor (ECF) ABC-transporter complex. Unlike classic ABC transporters this ECF transporter provides the energy necessary to transport a number of different substrates. In this organism these probably include biotin, thiamine precursor, niacin, pantothenic acid, queuosine precursor, riboflavin and thiamine. Uptake of niacin or riboflavin into proteosomes containing EcfA1A2T and Niax or RibU has been demonstrated. Uptake requires hydrolyzable Mg-ATP and is substrate-specific; NiaX-containing proteosomes did not transport riboflavin. In Lactococcus lactis subsp. cremoris (strain MG1363), this protein is Energy-coupling factor transporter ATP-binding protein EcfA1.